A 61-amino-acid chain; its full sequence is MAQKQIKVTLVRSVIGTKQSHRDTIRGLGLRRINSSRVLVDTPEVRGMIHKVGYLVSVSEA.

This sequence belongs to the universal ribosomal protein uL30 family. In terms of assembly, part of the 50S ribosomal subunit.

This is Large ribosomal subunit protein uL30 from Bordetella parapertussis (strain 12822 / ATCC BAA-587 / NCTC 13253).